Here is a 344-residue protein sequence, read N- to C-terminus: Dihydroorotase (344 aa).

H13 and H15 together coordinate Zn(2+). Substrate-binding positions include 15-17 (HLR) and N41. Residues K99, H136, and H174 each contribute to the Zn(2+) site. At K99 the chain carries N6-carboxylysine. H136 contacts substrate. L219 contacts substrate. D247 contributes to the Zn(2+) binding site. D247 is an active-site residue. 2 residues coordinate substrate: H251 and A263.

It belongs to the metallo-dependent hydrolases superfamily. DHOase family. Class II DHOase subfamily. Homodimer. Zn(2+) serves as cofactor.

The catalysed reaction is (S)-dihydroorotate + H2O = N-carbamoyl-L-aspartate + H(+). The protein operates within pyrimidine metabolism; UMP biosynthesis via de novo pathway; (S)-dihydroorotate from bicarbonate: step 3/3. Catalyzes the reversible cyclization of carbamoyl aspartate to dihydroorotate. The sequence is that of Dihydroorotase from Microcystis aeruginosa (strain NIES-843 / IAM M-2473).